A 121-amino-acid chain; its full sequence is Large ribosomal subunit protein bL12 (121 aa).

This sequence belongs to the bacterial ribosomal protein bL12 family. Homodimer. Part of the ribosomal stalk of the 50S ribosomal subunit. Forms a multimeric L10(L12)X complex, where L10 forms an elongated spine to which 2 to 4 L12 dimers bind in a sequential fashion. Binds GTP-bound translation factors.

Forms part of the ribosomal stalk which helps the ribosome interact with GTP-bound translation factors. Is thus essential for accurate translation. This Alkaliphilus oremlandii (strain OhILAs) (Clostridium oremlandii (strain OhILAs)) protein is Large ribosomal subunit protein bL12.